The following is a 171-amino-acid chain: Glucagon family neuropeptides (171 aa).

The first 22 residues, 1-22, serve as a signal peptide directing secretion; the sequence is MYRKALLVWLLVYGIMRCTVHS. A propeptide spanning residues 23–76 is cleaved from the precursor; it reads SPTALKYPALRLEDEVYDEDGNTLPDFAFDNNPIGIGNPASVFDDMYSFYYPAE. The segment at 145–153 is important for receptor binding; it reads VKKYLAAVL. Position 164 is a lysine amide (Lys-164). A propeptide spanning residues 168–171 is cleaved from the precursor; sequence VAYL.

Belongs to the glucagon family.

It is found in the secreted. In terms of biological role, primary role of GRF is to release GH from the pituitary. Functionally, PACAP is a neuropeptide involved in diverse array of physiological processes through activating the PACAP subfamily of class B1 G protein-coupled receptors: VIP receptor 1 (VIPR1), VIP receptor 2 (VIPR2), and PACAP type I receptor (ADCYAP1R1). Exerts neuroprotective and general cytoprotective effects due to anti-apoptotic, anti-inflammatory, and antioxidant actions. The polypeptide is Glucagon family neuropeptides (adcyap1) (Pelophylax ridibundus (Marsh frog)).